The chain runs to 142 residues: Small ribosomal subunit protein uS12 (142 aa).

The tract at residues 1 to 22 is disordered; the sequence is MPTFNQLVRKGRKAAKKKSTAP. The span at 9–19 shows a compositional bias: basic residues; sequence RKGRKAAKKKS. D102 bears the 3-methylthioaspartic acid mark.

Belongs to the universal ribosomal protein uS12 family. Part of the 30S ribosomal subunit. Contacts proteins S8 and S17. May interact with IF1 in the 30S initiation complex.

Its function is as follows. With S4 and S5 plays an important role in translational accuracy. In terms of biological role, interacts with and stabilizes bases of the 16S rRNA that are involved in tRNA selection in the A site and with the mRNA backbone. Located at the interface of the 30S and 50S subunits, it traverses the body of the 30S subunit contacting proteins on the other side and probably holding the rRNA structure together. The combined cluster of proteins S8, S12 and S17 appears to hold together the shoulder and platform of the 30S subunit. The protein is Small ribosomal subunit protein uS12 of Acetivibrio thermocellus (strain ATCC 27405 / DSM 1237 / JCM 9322 / NBRC 103400 / NCIMB 10682 / NRRL B-4536 / VPI 7372) (Clostridium thermocellum).